The sequence spans 391 residues: GTPase Obg (391 aa).

In terms of domain architecture, Obg spans 1–159 (MKFIDEALIR…RDLQLELMLL (159 aa)). An OBG-type G domain is found at 160–333 (ADVGMLGLPN…LTRDIMDFIE (174 aa)). Residues 166-173 (GLPNAGKS), 191-195 (FTTLV), 213-216 (DIPG), 283-286 (NKID), and 314-316 (SAA) contribute to the GTP site. Positions 173 and 193 each coordinate Mg(2+). The tract at residues 361 to 391 (QNPITEDDWDDLDDDGWTEEDDEGVEFIYKP) is disordered. The segment covering 365-385 (TEDDWDDLDDDGWTEEDDEGV) has biased composition (acidic residues).

The protein belongs to the TRAFAC class OBG-HflX-like GTPase superfamily. OBG GTPase family. In terms of assembly, monomer. Mg(2+) serves as cofactor.

The protein localises to the cytoplasm. Its function is as follows. An essential GTPase which binds GTP, GDP and possibly (p)ppGpp with moderate affinity, with high nucleotide exchange rates and a fairly low GTP hydrolysis rate. Plays a role in control of the cell cycle, stress response, ribosome biogenesis and in those bacteria that undergo differentiation, in morphogenesis control. The sequence is that of GTPase Obg from Glaesserella parasuis serovar 5 (strain SH0165) (Haemophilus parasuis).